Here is a 141-residue protein sequence, read N- to C-terminus: Large ribosomal subunit protein uL11 (141 aa).

Belongs to the universal ribosomal protein uL11 family. In terms of assembly, part of the ribosomal stalk of the 50S ribosomal subunit. Interacts with L10 and the large rRNA to form the base of the stalk. L10 forms an elongated spine to which L12 dimers bind in a sequential fashion forming a multimeric L10(L12)X complex. Post-translationally, one or more lysine residues are methylated.

In terms of biological role, forms part of the ribosomal stalk which helps the ribosome interact with GTP-bound translation factors. In Alkaliphilus oremlandii (strain OhILAs) (Clostridium oremlandii (strain OhILAs)), this protein is Large ribosomal subunit protein uL11.